A 332-amino-acid polypeptide reads, in one-letter code: MKLSIDNKKHVIFSLSKSKTLVENICKKLNISEGKMVCEHFADGETYIRFDESVRNKDIYIFQSTCPNVNDSLMELLIAIDALKRGSAKSITAILPYYGYARQDRKTKGREPITSKLIADMLTKAGANRVVLTDIHSDQTQGFFDIPVDSLRTYHIFLFRVIELLGKKDLVVVSPDYGGVKRARLIANTLELPLAIIDKRRPSHNVAESINVLGEVKNKNCLIVDDMIDTGGTVIAAAKLLQKEQAKKVCVMATHGLFNNDAEQKFMEAFDQKLIDFLFVSNSIPQYKFKAVKQFEVVDLASLYEEVVLCYANSLSVSAIYERHIEWIKKHV.

ATP is bound by residues 43–45 and 102–103; these read DGE and RQ. The Mg(2+) site is built by His-136 and Asp-176. The active site involves Lys-199. D-ribose 5-phosphate contacts are provided by residues Arg-201, Asp-225, and 229-233; that span reads DTGGT.

Belongs to the ribose-phosphate pyrophosphokinase family. Class I subfamily. In terms of assembly, homohexamer. Mg(2+) serves as cofactor.

The protein resides in the cytoplasm. The catalysed reaction is D-ribose 5-phosphate + ATP = 5-phospho-alpha-D-ribose 1-diphosphate + AMP + H(+). It participates in metabolic intermediate biosynthesis; 5-phospho-alpha-D-ribose 1-diphosphate biosynthesis; 5-phospho-alpha-D-ribose 1-diphosphate from D-ribose 5-phosphate (route I): step 1/1. Its function is as follows. Involved in the biosynthesis of the central metabolite phospho-alpha-D-ribosyl-1-pyrophosphate (PRPP) via the transfer of pyrophosphoryl group from ATP to 1-hydroxyl of ribose-5-phosphate (Rib-5-P). This is Ribose-phosphate pyrophosphokinase from Mycoplasma genitalium (strain ATCC 33530 / DSM 19775 / NCTC 10195 / G37) (Mycoplasmoides genitalium).